Consider the following 215-residue polypeptide: C-type lectin domain family 4 member D (215 aa).

The Cytoplasmic portion of the chain corresponds to 1–17 (MGLEKPQSKLEGGMHPQ). The helical; Signal-anchor for type II membrane protein transmembrane segment at 18–38 (LIPSVIAVVFILLLSVCFIAS) threads the bilayer. The Extracellular segment spans residues 39–215 (CLVTHHNFSR…ICKIPGTTLN (177 aa)). Asn45 is a glycosylation site (N-linked (GlcNAc...) asparagine). Cys84 and Cys95 are joined by a disulfide. The region spanning 91–208 (FQSNCYFPLT…CNFEASRICK (118 aa)) is the C-type lectin domain. 2 N-linked (GlcNAc...) asparagine glycosylation sites follow: Asn102 and Asn111. Disulfide bonds link Cys112–Cys207 and Cys182–Cys199. Residues Glu173, Asp175, Asn195, and Asp196 each contribute to the Ca(2+) site.

In terms of assembly, heterodimer with CLEC4E; disulfide-linked. CLEC4E acts as a bridge for interaction between CLEC4D and FCER1G to form a functional complex. Heterodimer with CLEC6A; this heterodimer forms a pattern recognition receptor (PRR) against fungal infection. As to expression, expressed weakly in peripheral blood leukocytes, bone marrow and spleen. Expression is confined mostly in monocytes and macrophage and seems to be up-regulated by IL-6, IL-10, TNF-alpha and IFN-gamma.

It localises to the cell membrane. Calcium-dependent lectin that acts as a pattern recognition receptor (PRR) of the innate immune system: recognizes damage-associated molecular patterns (DAMPs) of pathogen-associated molecular patterns (PAMPs) of bacteria and fungi. The PAMPs include alpha-mannans on C.albicans hypheas and mycobacterial trehalose 6,6'-dimycolate (TDM). Interacts with signaling adapter Fc receptor gamma chain/FCER1G, likely via CLEC4E, to form a functional complex in myeloid cells. Binding of mycobacterial TDM or C.albicans alpha-mannans to this receptor complex leads to phosphorylation of the immunoreceptor tyrosine-based activation motif (ITAM) of FCER1G, triggering activation of SYK, CARD9 and NF-kappa-B, consequently driving maturation of antigen-presenting cells and shaping antigen-specific priming of T-cells toward effector T-helper 1 and T-helper 17 cell subtypes. The heterodimer formed with CLEC6A is active against fungal infection. Functions as an endocytic receptor. May be involved in antigen uptake at the site of infection, either for clearance of the antigen, or for processing and further presentation to T-cells. The sequence is that of C-type lectin domain family 4 member D from Homo sapiens (Human).